We begin with the raw amino-acid sequence, 170 residues long: Opacity-related protein POPM3 (170 aa).

This sequence belongs to the opacity porin family.

It is found in the cell outer membrane. This Neisseria meningitidis serogroup C protein is Opacity-related protein POPM3 (opr).